Here is a 411-residue protein sequence, read N- to C-terminus: S-adenosylmethionine synthase (411 aa).

H15 provides a ligand contact to ATP. Residue D17 participates in Mg(2+) binding. E43 lines the K(+) pocket. The L-methionine site is built by E56 and Q99. The segment at Q99–T109 is flexible loop. ATP contacts are provided by residues D179–K181, D260, R266–K267, A283, and K287. Residue D260 coordinates L-methionine. K291 is an L-methionine binding site.

Belongs to the AdoMet synthase family. Homotetramer; dimer of dimers. The cofactor is Mg(2+). K(+) is required as a cofactor.

Its subcellular location is the cytoplasm. It carries out the reaction L-methionine + ATP + H2O = S-adenosyl-L-methionine + phosphate + diphosphate. It functions in the pathway amino-acid biosynthesis; S-adenosyl-L-methionine biosynthesis; S-adenosyl-L-methionine from L-methionine: step 1/1. Its function is as follows. Catalyzes the formation of S-adenosylmethionine (AdoMet) from methionine and ATP. The overall synthetic reaction is composed of two sequential steps, AdoMet formation and the subsequent tripolyphosphate hydrolysis which occurs prior to release of AdoMet from the enzyme. This is S-adenosylmethionine synthase from Corynebacterium jeikeium (strain K411).